A 1090-amino-acid chain; its full sequence is UPF0507 protein SCRG_01893 (1090 aa).

In terms of domain architecture, VPS9 spans 289–436 (FSVNQLLTDF…FEDFNKNTGN (148 aa)).

Belongs to the UPF0507 family.

The sequence is that of UPF0507 protein SCRG_01893 from Saccharomyces cerevisiae (strain RM11-1a) (Baker's yeast).